Consider the following 357-residue polypeptide: Ribosomal RNA large subunit methyltransferase F (357 aa).

A compositionally biased stretch (polar residues) spans methionine 1–alanine 15. The tract at residues methionine 1 to arginine 33 is disordered.

This sequence belongs to the methyltransferase superfamily. METTL16/RlmF family.

The protein localises to the cytoplasm. The catalysed reaction is adenosine(1618) in 23S rRNA + S-adenosyl-L-methionine = N(6)-methyladenosine(1618) in 23S rRNA + S-adenosyl-L-homocysteine + H(+). In terms of biological role, specifically methylates the adenine in position 1618 of 23S rRNA. The protein is Ribosomal RNA large subunit methyltransferase F of Shewanella putrefaciens (strain CN-32 / ATCC BAA-453).